The sequence spans 282 residues: S-formylglutathione hydrolase (282 aa).

The residue at position 2 (A2) is an N-acetylalanine. K4 is modified (N6-succinyllysine). Catalysis depends on charge relay system residues S149, D226, and H260.

The protein belongs to the esterase D family. In terms of assembly, homodimer.

The protein localises to the cytoplasm. The protein resides in the cytoplasmic vesicle. It catalyses the reaction S-formylglutathione + H2O = formate + glutathione + H(+). In terms of biological role, serine hydrolase involved in the detoxification of formaldehyde. This is S-formylglutathione hydrolase (ESD) from Bos taurus (Bovine).